The following is a 689-amino-acid chain: Glycine--tRNA ligase beta subunit (689 aa).

This sequence belongs to the class-II aminoacyl-tRNA synthetase family. As to quaternary structure, tetramer of two alpha and two beta subunits.

It localises to the cytoplasm. The enzyme catalyses tRNA(Gly) + glycine + ATP = glycyl-tRNA(Gly) + AMP + diphosphate. This is Glycine--tRNA ligase beta subunit from Salmonella schwarzengrund (strain CVM19633).